We begin with the raw amino-acid sequence, 430 residues long: Enolase (430 aa).

Gln-165 contacts (2R)-2-phosphoglycerate. Glu-207 serves as the catalytic Proton donor. The Mg(2+) site is built by Asp-244, Glu-287, and Asp-314. Residues Lys-339, Arg-368, Ser-369, and Lys-390 each coordinate (2R)-2-phosphoglycerate. Lys-339 (proton acceptor) is an active-site residue.

This sequence belongs to the enolase family. Component of the RNA degradosome, a multiprotein complex involved in RNA processing and mRNA degradation. The cofactor is Mg(2+).

It localises to the cytoplasm. The protein localises to the secreted. It is found in the cell surface. The enzyme catalyses (2R)-2-phosphoglycerate = phosphoenolpyruvate + H2O. Its pathway is carbohydrate degradation; glycolysis; pyruvate from D-glyceraldehyde 3-phosphate: step 4/5. Catalyzes the reversible conversion of 2-phosphoglycerate (2-PG) into phosphoenolpyruvate (PEP). It is essential for the degradation of carbohydrates via glycolysis. In Xanthomonas oryzae pv. oryzae (strain MAFF 311018), this protein is Enolase.